Consider the following 502-residue polypeptide: Probable glycerol kinase (502 aa).

Thr-11 contacts substrate. ATP is bound at residue Arg-15. Positions 85, 140, and 246 each coordinate substrate. ATP is bound by residues Thr-268, Gly-313, and 416–420; that span reads GMIAN.

The protein belongs to the FGGY kinase family.

It carries out the reaction glycerol + ATP = sn-glycerol 3-phosphate + ADP + H(+). Its pathway is polyol metabolism; glycerol degradation via glycerol kinase pathway; sn-glycerol 3-phosphate from glycerol: step 1/1. The protein is Probable glycerol kinase of Caenorhabditis elegans.